The chain runs to 121 residues: Dihydroneopterin aldolase (121 aa).

Substrate-binding residues include Glu-25 and Met-114.

Belongs to the archaeal dihydroneopterin aldolase family. In terms of assembly, homotetramer.

The enzyme catalyses 7,8-dihydroneopterin = 6-hydroxymethyl-7,8-dihydropterin + glycolaldehyde. The protein operates within cofactor biosynthesis; 5,6,7,8-tetrahydromethanopterin biosynthesis. Catalyzes the conversion of 7,8-dihydroneopterin (H2Neo) to 6-hydroxymethyl-7,8-dihydropterin (6-HMD). This Methanocaldococcus jannaschii (strain ATCC 43067 / DSM 2661 / JAL-1 / JCM 10045 / NBRC 100440) (Methanococcus jannaschii) protein is Dihydroneopterin aldolase.